A 391-amino-acid polypeptide reads, in one-letter code: Elongation factor Tu 2 (391 aa).

The region spanning 10-201 is the tr-type G domain; it reads KPHVNIGTIG…EVDNYIPTPE (192 aa). A G1 region spans residues 19-26; that stretch reads GHVDHGKT. 19–26 contacts GTP; sequence GHVDHGKT. Thr26 serves as a coordination point for Mg(2+). Residues 55–59 form a G2 region; sequence GITIS. A G3 region spans residues 76 to 79; that stretch reads DCPG. Residues 76–80 and 131–134 each bind GTP; these read DCPGH and NKVD. The interval 131–134 is G4; that stretch reads NKVD. Residues 169-171 are G5; that stretch reads SAL.

This sequence belongs to the TRAFAC class translation factor GTPase superfamily. Classic translation factor GTPase family. EF-Tu/EF-1A subfamily. Monomer.

The protein resides in the cytoplasm. It catalyses the reaction GTP + H2O = GDP + phosphate + H(+). In terms of biological role, GTP hydrolase that promotes the GTP-dependent binding of aminoacyl-tRNA to the A-site of ribosomes during protein biosynthesis. The protein is Elongation factor Tu 2 of Bartonella quintana (strain Toulouse) (Rochalimaea quintana).